Consider the following 65-residue polypeptide: Large ribosomal subunit protein bL35 (65 aa).

Residues 20-42 form a disordered region; sequence GKVRRHHANASHIMTTKTTKRKR.

It belongs to the bacterial ribosomal protein bL35 family.

This chain is Large ribosomal subunit protein bL35, found in Syntrophus aciditrophicus (strain SB).